The primary structure comprises 313 residues: tRNA dimethylallyltransferase (313 aa).

Gly-10–Thr-17 lines the ATP pocket. Thr-12 to Thr-17 is a binding site for substrate. Interaction with substrate tRNA stretches follow at residues Asp-35–Met-38, Gln-159–Arg-163, and Arg-240–Arg-245.

Belongs to the IPP transferase family. As to quaternary structure, monomer. It depends on Mg(2+) as a cofactor.

The enzyme catalyses adenosine(37) in tRNA + dimethylallyl diphosphate = N(6)-dimethylallyladenosine(37) in tRNA + diphosphate. Its function is as follows. Catalyzes the transfer of a dimethylallyl group onto the adenine at position 37 in tRNAs that read codons beginning with uridine, leading to the formation of N6-(dimethylallyl)adenosine (i(6)A). This is tRNA dimethylallyltransferase from Legionella pneumophila (strain Corby).